The sequence spans 399 residues: Flavohemoprotein (399 aa).

Residues 1–138 (MLDNKTIEII…IADAFIGIEK (138 aa)) enclose the Globin domain. Residue His-85 coordinates heme b. Active-site charge relay system residues include Tyr-95 and Glu-137. The tract at residues 149 to 399 (GGWKEYKPFV…GPQLSLAQSV (251 aa)) is reductase. Residues 152–255 (KEYKPFVIAK…SAPAGDFVLD (104 aa)) enclose the FAD-binding FR-type domain. FAD-binding positions include Tyr-190 and 206–209 (RQYS). An NADP(+)-binding site is contributed by 268–273 (GVGITP). FAD is bound at residue 388–391 (LFGP).

The protein belongs to the globin family. Two-domain flavohemoproteins subfamily. This sequence in the C-terminal section; belongs to the flavoprotein pyridine nucleotide cytochrome reductase family. It depends on heme b as a cofactor. The cofactor is FAD.

The catalysed reaction is 2 nitric oxide + NADPH + 2 O2 = 2 nitrate + NADP(+) + H(+). It catalyses the reaction 2 nitric oxide + NADH + 2 O2 = 2 nitrate + NAD(+) + H(+). In terms of biological role, is involved in NO detoxification in an aerobic process, termed nitric oxide dioxygenase (NOD) reaction that utilizes O(2) and NAD(P)H to convert NO to nitrate, which protects the bacterium from various noxious nitrogen compounds. Therefore, plays a central role in the inducible response to nitrosative stress. This is Flavohemoprotein (hmp) from Bacillus subtilis (strain 168).